A 330-amino-acid polypeptide reads, in one-letter code: MKTAYIAKQRQISFVKSHFSRQLEERLGLIEVQAPILSRVGDGTQDNLSGCEKAVQVKVKALPDAQFEVVHSLAKWKRQTLGQHDFSAGEGLYTHMKALRPDEDRLSSLHSVYVDQWDWERVMGDGERQFSTLKSTVEAIWEGIKATEAAVSEEFGLAPFLPDQIHFVHSQELLSRYPELDAKGRERAIAKDLGAVFLVGIGGKLSDGHRHDVRAPDYDDWSTPSELGHAGLNGDILVWNPVLEDAFELSSMGIRVDADTLKHQLALTGDEDRLELEWHQALLRGEMPQTIGGGIGQSRLTMLLLQLPHIGQVQCGVWPAAVRESVPSLL.

The protein belongs to the class-II aminoacyl-tRNA synthetase family. AsnA subfamily.

The protein resides in the cytoplasm. It carries out the reaction L-aspartate + NH4(+) + ATP = L-asparagine + AMP + diphosphate + H(+). Its pathway is amino-acid biosynthesis; L-asparagine biosynthesis; L-asparagine from L-aspartate (ammonia route): step 1/1. This is Aspartate--ammonia ligase from Escherichia coli O7:K1 (strain IAI39 / ExPEC).